The sequence spans 76 residues: DNA-directed RNA polymerase subunit epsilon (76 aa).

This sequence belongs to the RNA polymerase subunit epsilon family. As to quaternary structure, RNAP is composed of a core of 2 alpha, a beta and a beta' subunit. The core is associated with a delta subunit, and at least one of epsilon or omega. When a sigma factor is associated with the core the holoenzyme is formed, which can initiate transcription.

It catalyses the reaction RNA(n) + a ribonucleoside 5'-triphosphate = RNA(n+1) + diphosphate. In terms of biological role, a non-essential component of RNA polymerase (RNAP). The protein is DNA-directed RNA polymerase subunit epsilon of Streptococcus mutans serotype c (strain ATCC 700610 / UA159).